The chain runs to 1113 residues: Sterol regulatory element binding protein sbp-1 (1113 aa).

The segment at Met1–Asp52 is transcriptional activation (acidic). Disordered regions lie at residues Asp24 to Asp68, Leu101 to Pro132, Ser206 to Asn274, and Glu290 to Thr345. A compositionally biased stretch (basic residues) spans Pro229–Pro238. Residues Ala324 to Ser337 are compositionally biased toward acidic residues. Residues Glu355–Arg368 form a basic motif region. A bHLH domain is found at Glu355–Val405. The helix-loop-helix motif stretch occupies residues Cys369–Val405. Positions Leu395–Thr422 form a coiled coil. The interval Thr437–Arg472 is disordered. Transmembrane regions (helical) follow at residues Val478 to Gly498 and Met541 to Ile561.

In terms of processing, processed in the Golgi apparatus, releasing the protein from the membrane. Post-translationally, ubiquitinated; the nuclear form has a rapid turnover and is rapidly ubiquitinated and degraded by the proteasome in the nucleus. In terms of tissue distribution, broadly expressed, including many cells in the head. Expressed in the intestine.

The protein localises to the nucleus. It is found in the endoplasmic reticulum membrane. Its function is as follows. Transcription factor involved in maintaining normal fat levels. Regulates the expression of genes involved in lipid metabolism in response to nutrient availability, such as the fatty-acid desaturases fat-5, fat-6 and fat-7. In response to a high-glucose diet, promotes fatty acid synthesis, elongation and desaturation, acting in concert with transcription factor mxl-3. Plays a role in synthesis of monomethyl branched-chain fatty acids (mmBCFAs) as well as other very-long-chain fatty acids. Downstream of the cis-Golgi membrane protein eas-1/GOLT1B and the E3 ubiquitin ligase rnf-145/RNF145, plays a role in the regulation of glial size, perhaps by modulating synthesis of long-chain polyunsaturated fatty-acids (LC-PUFA). Modulates expression of genes in the one-carbon cycle, which produces the methyl donor S-adenosylmethionine (SAM). Probably involved in a feedback loop in which decreased levels of SAM lead to increased transcriptional activity of sbp-1, thereby causing lipid accumulation. Involved in the negative regulation of zinc homeostasis. Involved in the response to simulated microgravity, in concert with Mediator complex subunit mdt-15, probably acting in the intestine. Plays a role in transgenerational lipid accumulation in response to a high-fat diet, probably acting by upregulating wdr-5.1 expression to increase the level of trimethylated 'Lys-4' histone H3 (H3K4me3), which may then induce the expression of fat-5, fat-6 and fat-7. May act as an oxygen sensor for lipid metabolism. Functionally, precursor of the transcription factor form, which is embedded in the endoplasmic reticulum membrane. Processing of this form allows release of the transcription factor form that translocates into the nucleus and activates transcription of genes involved in sterol biosynthesis and lipid homeostasis. In terms of biological role, key transcription factor that regulates expression of genes involved in sterol biosynthesis and lipid homeostasis. The chain is Sterol regulatory element binding protein sbp-1 from Caenorhabditis elegans.